A 193-amino-acid polypeptide reads, in one-letter code: Ion-translocating oxidoreductase complex subunit A (193 aa).

Transmembrane regions (helical) follow at residues 5 to 25, 47 to 67, 72 to 92, 102 to 122, 134 to 154, and 171 to 191; these read LLLF…FLGL, FVIT…LLPL, LRTM…EMVV, LLGI…VPLL, AIYG…FAGV, and SIAL…AGLV.

This sequence belongs to the NqrDE/RnfAE family. The complex is composed of six subunits: RnfA, RnfB, RnfC, RnfD, RnfE and RnfG.

The protein resides in the cell inner membrane. Its function is as follows. Part of a membrane-bound complex that couples electron transfer with translocation of ions across the membrane. This is Ion-translocating oxidoreductase complex subunit A from Erwinia tasmaniensis (strain DSM 17950 / CFBP 7177 / CIP 109463 / NCPPB 4357 / Et1/99).